We begin with the raw amino-acid sequence, 263 residues long: Cytochrome c oxidase subunit 3 (263 aa).

The next 7 helical transmembrane spans lie at 9–29 (PFHM…AMIL), 40–60 (FNMN…IQWW), 84–104 (GMIL…WAFF), 129–149 (IQIP…ITWA), 161–181 (ALQG…LQMY), 198–218 (TFFV…TFLL), and 241–261 (AWYW…IYWW).

The protein belongs to the cytochrome c oxidase subunit 3 family. In terms of assembly, component of the cytochrome c oxidase (complex IV, CIV), a multisubunit enzyme composed of a catalytic core of 3 subunits and several supernumerary subunits. The complex exists as a monomer or a dimer and forms supercomplexes (SCs) in the inner mitochondrial membrane with ubiquinol-cytochrome c oxidoreductase (cytochrome b-c1 complex, complex III, CIII).

It is found in the mitochondrion inner membrane. It catalyses the reaction 4 Fe(II)-[cytochrome c] + O2 + 8 H(+)(in) = 4 Fe(III)-[cytochrome c] + 2 H2O + 4 H(+)(out). In terms of biological role, component of the cytochrome c oxidase, the last enzyme in the mitochondrial electron transport chain which drives oxidative phosphorylation. The respiratory chain contains 3 multisubunit complexes succinate dehydrogenase (complex II, CII), ubiquinol-cytochrome c oxidoreductase (cytochrome b-c1 complex, complex III, CIII) and cytochrome c oxidase (complex IV, CIV), that cooperate to transfer electrons derived from NADH and succinate to molecular oxygen, creating an electrochemical gradient over the inner membrane that drives transmembrane transport and the ATP synthase. Cytochrome c oxidase is the component of the respiratory chain that catalyzes the reduction of oxygen to water. Electrons originating from reduced cytochrome c in the intermembrane space (IMS) are transferred via the dinuclear copper A center (CU(A)) of subunit 2 and heme A of subunit 1 to the active site in subunit 1, a binuclear center (BNC) formed by heme A3 and copper B (CU(B)). The BNC reduces molecular oxygen to 2 water molecules using 4 electrons from cytochrome c in the IMS and 4 protons from the mitochondrial matrix. The protein is Cytochrome c oxidase subunit 3 (COIII) of Locusta migratoria (Migratory locust).